Reading from the N-terminus, the 144-residue chain is Large ribosomal subunit protein uL15 (144 aa).

The disordered stretch occupies residues 1–53 (MRLNTLSPAEGAKHNAKRLGRGIGSGLGKTSGRGHKGQKARTGGGVRRGFEGG). Residues 21 to 31 (RGIGSGLGKTS) are compositionally biased toward gly residues.

The protein belongs to the universal ribosomal protein uL15 family. As to quaternary structure, part of the 50S ribosomal subunit.

Binds to the 23S rRNA. The polypeptide is Large ribosomal subunit protein uL15 (Histophilus somni (strain 129Pt) (Haemophilus somnus)).